Reading from the N-terminus, the 257-residue chain is 1-(5-phosphoribosyl)-5-[(5-phosphoribosylamino)methylideneamino] imidazole-4-carboxamide isomerase (257 aa).

Residue Asp8 is the Proton acceptor of the active site. Asp129 (proton donor) is an active-site residue.

This sequence belongs to the HisA/HisF family.

Its subcellular location is the cytoplasm. The enzyme catalyses 1-(5-phospho-beta-D-ribosyl)-5-[(5-phospho-beta-D-ribosylamino)methylideneamino]imidazole-4-carboxamide = 5-[(5-phospho-1-deoxy-D-ribulos-1-ylimino)methylamino]-1-(5-phospho-beta-D-ribosyl)imidazole-4-carboxamide. It participates in amino-acid biosynthesis; L-histidine biosynthesis; L-histidine from 5-phospho-alpha-D-ribose 1-diphosphate: step 4/9. This chain is 1-(5-phosphoribosyl)-5-[(5-phosphoribosylamino)methylideneamino] imidazole-4-carboxamide isomerase, found in Acaryochloris marina (strain MBIC 11017).